The primary structure comprises 395 residues: Acid ceramidase (395 aa).

An N-terminal signal peptide occupies residues 1–21 (MPGRSCVALVLLAAAVSCAVA). A disulfide bridge links cysteine 31 with cysteine 340. Cysteine 143 acts as the Nucleophile in catalysis. Residues asparagine 173, asparagine 195, asparagine 259, asparagine 286, asparagine 342, and asparagine 348 are each glycosylated (N-linked (GlcNAc...) asparagine). Cysteine 388 and cysteine 392 form a disulfide bridge.

It belongs to the acid ceramidase family. As to quaternary structure, heterodimer; disulfide-linked. The heterodimer is composed of the disulfide-linked alpha and beta chains produced by autocatalytic cleavage of the precursor. Isoform 2: May interact with NR5A1 in the nucleus; the direct interaction would negatively regulate NR5A1 transcriptional activity. Post-translationally, N-glycosylated. Proteolytically cleaved into two chains alpha and beta that remain associated via a disulfide bond. Cleavage gives rise to a conformation change that activates the enzyme. The same catalytic Cys residue mediates the autoproteolytic cleavage and subsequent hydrolysis of lipid substrates. The beta chain may undergo an additional C-terminal processing. As to expression, broadly expressed with higher expression in heart.

It localises to the lysosome. Its subcellular location is the secreted. It is found in the nucleus. The protein localises to the cytoplasm. The enzyme catalyses an N-acylsphing-4-enine + H2O = sphing-4-enine + a fatty acid. The catalysed reaction is a beta-D-glucosyl-(1&lt;-&gt;1')-N-acylsphing-4-enine + H2O = beta-D-glucosyl-(1&lt;-&gt;1)-sphing-4-enine + a fatty acid. It carries out the reaction a globoside Gb3Cer + H2O = a lysoGb3 + a fatty acid. It catalyses the reaction a globoside Gb3Cer (d18:1(4E)) + H2O = a lysoGb3(d18:1(4E)) + a fatty acid. The enzyme catalyses N-dodecanoylsphing-4-enine + H2O = dodecanoate + sphing-4-enine. The catalysed reaction is N-tetradecanoylsphing-4-enine + H2O = tetradecanoate + sphing-4-enine. It carries out the reaction N-hexadecanoylsphing-4-enine + H2O = sphing-4-enine + hexadecanoate. It catalyses the reaction N-octadecanoylsphing-4-enine + H2O = sphing-4-enine + octadecanoate. The enzyme catalyses N-dodecanoyl-(4R)-hydroxysphinganine + H2O = (4R)-hydroxysphinganine + dodecanoate. The catalysed reaction is N-(dodecanoyl)-sphinganine + H2O = dodecanoate + sphinganine. It carries out the reaction N-(acetyl)-sphing-4-enine + H2O = sphing-4-enine + acetate. It catalyses the reaction N-(hexanoyl)sphing-4-enine + H2O = hexanoate + sphing-4-enine. The enzyme catalyses N-octanoylsphing-4-enine + H2O = octanoate + sphing-4-enine. The catalysed reaction is N-(9Z-octadecenoyl)-sphing-4-enine + H2O = sphing-4-enine + (9Z)-octadecenoate. It carries out the reaction N-dodecanoylethanolamine + H2O = dodecanoate + ethanolamine. It functions in the pathway lipid metabolism; sphingolipid metabolism. With respect to regulation, activated by Ca(2+), Mg(2+) and Na(+) cations. Inhibited by Zn(2+). Phosphatidylserine and phosphatidic acid stimulate while cardiolipin, phosphatidylcholine, lysophosphatidylcholine, phosphatidylethanolamine, phosphatidylinositol and sphingomyelin inhibit the reverse ceramide synthase activity. Phosphatidic acid, phosphatidylinositol and C16-ceramide inhibit the ceramidase/hydrolase activity. Lysosomal ceramidase that hydrolyzes sphingolipid ceramides into sphingosine and free fatty acids at acidic pH. Ceramides, sphingosine, and its phosphorylated form sphingosine-1-phosphate are bioactive lipids that mediate cellular signaling pathways regulating several biological processes including cell proliferation, apoptosis and differentiation. Has a higher catalytic efficiency towards C12-ceramides versus other ceramides. Also catalyzes the reverse reaction allowing the synthesis of ceramides from fatty acids and sphingosine. For the reverse synthetic reaction, the natural sphingosine D-erythro isomer is more efficiently utilized as a substrate compared to D-erythro-dihydrosphingosine and D-erythro-phytosphingosine, while the fatty acids with chain lengths of 12 or 14 carbons are the most efficiently used. Also has an N-acylethanolamine hydrolase activity. By regulating the levels of ceramides, sphingosine and sphingosine-1-phosphate in the epidermis, mediates the calcium-induced differentiation of epidermal keratinocytes. Also indirectly regulates tumor necrosis factor/TNF-induced apoptosis. By regulating the intracellular balance between ceramides and sphingosine, in adrenocortical cells, probably also acts as a regulator of steroidogenesis. Functionally, may directly regulate steroidogenesis by binding the nuclear receptor NR5A1 and negatively regulating its transcriptional activity. This is Acid ceramidase from Homo sapiens (Human).